The chain runs to 657 residues: Threonine--tRNA ligase (657 aa).

The 70-residue stretch at 1-70 (MSDHKESTGA…NSDAAIEIIT (70 aa)) folds into the TGS domain. A catalytic region spans residues 253–555 (DHRKLGAELE…LIEHTAGNFP (303 aa)). The Zn(2+) site is built by Cys351, His402, and His532.

Belongs to the class-II aminoacyl-tRNA synthetase family. In terms of assembly, homodimer. It depends on Zn(2+) as a cofactor.

The protein localises to the cytoplasm. It catalyses the reaction tRNA(Thr) + L-threonine + ATP = L-threonyl-tRNA(Thr) + AMP + diphosphate + H(+). In terms of biological role, catalyzes the attachment of threonine to tRNA(Thr) in a two-step reaction: L-threonine is first activated by ATP to form Thr-AMP and then transferred to the acceptor end of tRNA(Thr). Also edits incorrectly charged L-seryl-tRNA(Thr). The chain is Threonine--tRNA ligase from Chlorobium chlorochromatii (strain CaD3).